The sequence spans 689 residues: Elongation factor G (689 aa).

The 275-residue stretch at aspartate 8–leucine 282 folds into the tr-type G domain. Residues alanine 17–threonine 24, aspartate 81–histidine 85, and asparagine 135–aspartate 138 each bind GTP.

This sequence belongs to the TRAFAC class translation factor GTPase superfamily. Classic translation factor GTPase family. EF-G/EF-2 subfamily.

The protein localises to the cytoplasm. In terms of biological role, catalyzes the GTP-dependent ribosomal translocation step during translation elongation. During this step, the ribosome changes from the pre-translocational (PRE) to the post-translocational (POST) state as the newly formed A-site-bound peptidyl-tRNA and P-site-bound deacylated tRNA move to the P and E sites, respectively. Catalyzes the coordinated movement of the two tRNA molecules, the mRNA and conformational changes in the ribosome. This is Elongation factor G from Thermoanaerobacter pseudethanolicus (strain ATCC 33223 / 39E) (Clostridium thermohydrosulfuricum).